The sequence spans 464 residues: UDP-N-acetylmuramoylalanine--D-glutamate ligase (464 aa).

Residue 127–133 coordinates ATP; it reads GSNGKST.

The protein belongs to the MurCDEF family.

It is found in the cytoplasm. The catalysed reaction is UDP-N-acetyl-alpha-D-muramoyl-L-alanine + D-glutamate + ATP = UDP-N-acetyl-alpha-D-muramoyl-L-alanyl-D-glutamate + ADP + phosphate + H(+). It participates in cell wall biogenesis; peptidoglycan biosynthesis. Functionally, cell wall formation. Catalyzes the addition of glutamate to the nucleotide precursor UDP-N-acetylmuramoyl-L-alanine (UMA). The protein is UDP-N-acetylmuramoylalanine--D-glutamate ligase of Roseobacter denitrificans (strain ATCC 33942 / OCh 114) (Erythrobacter sp. (strain OCh 114)).